A 106-amino-acid chain; its full sequence is 3-phenylpropionate/cinnamic acid dioxygenase ferredoxin subunit (106 aa).

One can recognise a Rieske domain in the interval 4-99 (IYACPVADVP…VHVEGGDIFI (96 aa)). [2Fe-2S] cluster-binding residues include cysteine 42, histidine 44, cysteine 62, and histidine 65.

This sequence belongs to the bacterial ring-hydroxylating dioxygenase ferredoxin component family. As to quaternary structure, this dioxygenase system consists of four proteins: the two subunits of the hydroxylase component (HcaE and HcaF), a ferredoxin (HcaC) and a ferredoxin reductase (HcaD). [2Fe-2S] cluster serves as cofactor.

The protein operates within aromatic compound metabolism; 3-phenylpropanoate degradation. In terms of biological role, part of the multicomponent 3-phenylpropionate dioxygenase, that converts 3-phenylpropionic acid (PP) and cinnamic acid (CI) into 3-phenylpropionate-dihydrodiol (PP-dihydrodiol) and cinnamic acid-dihydrodiol (CI-dihydrodiol), respectively. This protein seems to be a 2Fe-2S ferredoxin. The sequence is that of 3-phenylpropionate/cinnamic acid dioxygenase ferredoxin subunit from Shigella flexneri serotype 5b (strain 8401).